Reading from the N-terminus, the 469-residue chain is ATP-dependent protease ATPase subunit HslU (469 aa).

ATP is bound by residues isoleucine 24, 66-71 (GVGKTE), aspartate 282, glutamate 347, and arginine 419.

The protein belongs to the ClpX chaperone family. HslU subfamily. As to quaternary structure, a double ring-shaped homohexamer of HslV is capped on each side by a ring-shaped HslU homohexamer. The assembly of the HslU/HslV complex is dependent on binding of ATP.

It is found in the cytoplasm. Its function is as follows. ATPase subunit of a proteasome-like degradation complex; this subunit has chaperone activity. The binding of ATP and its subsequent hydrolysis by HslU are essential for unfolding of protein substrates subsequently hydrolyzed by HslV. HslU recognizes the N-terminal part of its protein substrates and unfolds these before they are guided to HslV for hydrolysis. This Listeria welshimeri serovar 6b (strain ATCC 35897 / DSM 20650 / CCUG 15529 / CIP 8149 / NCTC 11857 / SLCC 5334 / V8) protein is ATP-dependent protease ATPase subunit HslU.